Consider the following 434-residue polypeptide: MSVFKGEVTALPPDKSISHRAALIGALSDGTTEIVNFSGGFDNQSTLAVLQASGIALIQEECAGSYGRRIRRVVIESRGLWSFLAPQAPLMCNNSGSTMRMFAGILAAQPFESVLEGDSSLMKRPMNRVADPLRQMGAQVELSFSGTAPIRIQGTKDLHSLEYRLPVSSAQVKSLVAFAALHADGQTRIIEPIRSRDHTELMLGLETIDQPNGERVIIVPGRKRIESKPFYIPADPSAACFIVALALLAKGSDIIIRDLCLNPTRTGYLAILAGAGAGISVENSRVIGGEAIGDVLVHSEGELNSLVISDPHEVANVIDEIPMLAVLSAFSSGRFELHHAAELRTKESDRIDALVVNLERLGFQCEQYPDGFKVNGRIAMPKGVVSIESFDDHRIAMSFAIAGKATGVDLAISDIGVVGVSFPNFFEIIESLEV.

3-phosphoshikimate is bound by residues K15, S16, and R20. K15 lines the phosphoenolpyruvate pocket. 2 residues coordinate phosphoenolpyruvate: G96 and R124. Residues S169, Q171, S195, D319, and K346 each contribute to the 3-phosphoshikimate site. Q171 contributes to the phosphoenolpyruvate binding site. Residue D319 is the Proton acceptor of the active site. Phosphoenolpyruvate contacts are provided by R350 and R394.

It belongs to the EPSP synthase family. As to quaternary structure, monomer.

The protein localises to the cytoplasm. The catalysed reaction is 3-phosphoshikimate + phosphoenolpyruvate = 5-O-(1-carboxyvinyl)-3-phosphoshikimate + phosphate. Its pathway is metabolic intermediate biosynthesis; chorismate biosynthesis; chorismate from D-erythrose 4-phosphate and phosphoenolpyruvate: step 6/7. In terms of biological role, catalyzes the transfer of the enolpyruvyl moiety of phosphoenolpyruvate (PEP) to the 5-hydroxyl of shikimate-3-phosphate (S3P) to produce enolpyruvyl shikimate-3-phosphate and inorganic phosphate. The polypeptide is 3-phosphoshikimate 1-carboxyvinyltransferase (Chlorobium phaeobacteroides (strain DSM 266 / SMG 266 / 2430)).